Reading from the N-terminus, the 437-residue chain is UDP-N-acetylmuramate--L-alanine ligase (437 aa).

An ATP-binding site is contributed by 108–114; the sequence is GAHGKTS.

The protein belongs to the MurCDEF family.

It localises to the cytoplasm. It carries out the reaction UDP-N-acetyl-alpha-D-muramate + L-alanine + ATP = UDP-N-acetyl-alpha-D-muramoyl-L-alanine + ADP + phosphate + H(+). Its pathway is cell wall biogenesis; peptidoglycan biosynthesis. Its function is as follows. Cell wall formation. The sequence is that of UDP-N-acetylmuramate--L-alanine ligase from Staphylococcus saprophyticus subsp. saprophyticus (strain ATCC 15305 / DSM 20229 / NCIMB 8711 / NCTC 7292 / S-41).